Reading from the N-terminus, the 465-residue chain is ATP synthase subunit beta (465 aa).

148 to 155 (GGAGVGKT) provides a ligand contact to ATP.

Belongs to the ATPase alpha/beta chains family. F-type ATPases have 2 components, CF(1) - the catalytic core - and CF(0) - the membrane proton channel. CF(1) has five subunits: alpha(3), beta(3), gamma(1), delta(1), epsilon(1). CF(0) has three main subunits: a(1), b(2) and c(9-12). The alpha and beta chains form an alternating ring which encloses part of the gamma chain. CF(1) is attached to CF(0) by a central stalk formed by the gamma and epsilon chains, while a peripheral stalk is formed by the delta and b chains.

The protein localises to the cell inner membrane. The enzyme catalyses ATP + H2O + 4 H(+)(in) = ADP + phosphate + 5 H(+)(out). In terms of biological role, produces ATP from ADP in the presence of a proton gradient across the membrane. The catalytic sites are hosted primarily by the beta subunits. In Chromobacterium violaceum (strain ATCC 12472 / DSM 30191 / JCM 1249 / CCUG 213 / NBRC 12614 / NCIMB 9131 / NCTC 9757 / MK), this protein is ATP synthase subunit beta.